Consider the following 396-residue polypeptide: Ribosomal RNA small subunit methyltransferase H (396 aa).

S-adenosyl-L-methionine-binding positions include 101–103, Asp120, Tyr147, Asp171, and Gln178; that span reads GGH.

This sequence belongs to the methyltransferase superfamily. RsmH family.

The protein localises to the cytoplasm. It catalyses the reaction cytidine(1402) in 16S rRNA + S-adenosyl-L-methionine = N(4)-methylcytidine(1402) in 16S rRNA + S-adenosyl-L-homocysteine + H(+). Specifically methylates the N4 position of cytidine in position 1402 (C1402) of 16S rRNA. The protein is Ribosomal RNA small subunit methyltransferase H of Mycobacterium bovis (strain ATCC BAA-935 / AF2122/97).